Reading from the N-terminus, the 220-residue chain is MTTLQISSSLFRSFLLVICVFVIPSLSSDSDPLQDFCVGDLKASPSINGFPCKSSVSASDFFFSGLGGPLNTSTPNGVAVSPANVLTFPGLNTLGLSMNNVEFAPGGVNPPHSHPRATEAGVVIEGSVFVGFLTTNNTLFSKVLNAGEMFVVPRGLVHFQWNVGKVKARLITSFNSQLPGSAVLPSTLFGSNPTIPNAVLTKTFRTDDVTVNKLKSKFAV.

Positions 1–27 are cleaved as a signal peptide; it reads MTTLQISSSLFRSFLLVICVFVIPSLS. Cysteines 37 and 52 form a disulfide. The Cupin type-1 domain occupies 64–212; sequence SGLGGPLNTS…TFRTDDVTVN (149 aa). Residue Asn-71 is glycosylated (N-linked (GlcNAc...) asparagine). Mn(2+) is bound by residues His-112, His-114, and Glu-119. Asn-136 carries an N-linked (GlcNAc...) asparagine glycan. Residue His-158 coordinates Mn(2+).

This sequence belongs to the germin family. As to quaternary structure, oligomer (believed to be a pentamer but probably hexamer).

The protein localises to the secreted. It localises to the extracellular space. The protein resides in the apoplast. May play a role in plant defense. Probably has no oxalate oxidase activity even if the active site is conserved. This is Germin-like protein subfamily T member 2 from Arabidopsis thaliana (Mouse-ear cress).